A 400-amino-acid chain; its full sequence is Elongation factor Tu (400 aa).

In terms of domain architecture, tr-type G spans 10-208 (KPHLNVGTIG…TMDSYFPEPQ (199 aa)). Residues 19–26 (GHIDHGKT) are G1. 19-26 (GHIDHGKT) contacts GTP. A Mg(2+)-binding site is contributed by T26. The interval 60–64 (GITIN) is G2. Positions 81–84 (DCPG) are G3. GTP is bound by residues 81-85 (DCPGH) and 136-139 (NKTD). The interval 136-139 (NKTD) is G4. Residues 174-176 (SAL) are G5.

This sequence belongs to the TRAFAC class translation factor GTPase superfamily. Classic translation factor GTPase family. EF-Tu/EF-1A subfamily. In terms of assembly, monomer.

It is found in the cytoplasm. The enzyme catalyses GTP + H2O = GDP + phosphate + H(+). In terms of biological role, GTP hydrolase that promotes the GTP-dependent binding of aminoacyl-tRNA to the A-site of ribosomes during protein biosynthesis. This Thermosipho africanus (strain TCF52B) protein is Elongation factor Tu.